A 116-amino-acid polypeptide reads, in one-letter code: MHTSELLKHIYDINLSYLLLAQRLIVQDKASAMFRLGINEEMATTLAALTLPQMVKLAETNQLVCHFRFDSHQTITQLTQDSRVDDLQQIHTGIMLSTRLLNDVNQPEEALRKKRA.

Belongs to the FlhD family. Homodimer; disulfide-linked. Forms a heterohexamer composed of two FlhC and four FlhD subunits. Each FlhC binds a FlhD dimer, forming a heterotrimer, and a hexamer assembles by dimerization of two heterotrimers.

The protein localises to the cytoplasm. Its function is as follows. Functions in complex with FlhC as a master transcriptional regulator that regulates transcription of several flagellar and non-flagellar operons by binding to their promoter region. Activates expression of class 2 flagellar genes, including fliA, which is a flagellum-specific sigma factor that turns on the class 3 genes. Also regulates genes whose products function in a variety of physiological pathways. This chain is Flagellar transcriptional regulator FlhD, found in Escherichia coli O9:H4 (strain HS).